We begin with the raw amino-acid sequence, 25 residues long: Caerin 1.1 (25 aa).

Residue Leu-25 is modified to Leucine amide.

In terms of tissue distribution, expressed by the skin dorsal glands.

The protein resides in the secreted. Its function is as follows. Antibacterial peptide with wide spectrum of activity. Active against the Gram-positive bacteria B.cereus (MIC=50 ug/ml), E.faecalis (MIC=25 ug/ml), L.lactis (MIC=1.5 ug/ml), L.innocua (MIC=25 ug/ml), S.aureus (MIC=3 ug/ml), S.epidermidis (MIC=12 ug/ml) and S.uberis (MIC=12 ug/ml), and against the Gram-negative bacteria E.coli (MIC=100 ug/ml) and P.multocida (MIC=25 ug/ml). The sequence is that of Caerin 1.1 from Litoria peronii (Emerald spotted tree frog).